The primary structure comprises 210 residues: Dephospho-CoA kinase (210 aa).

In terms of domain architecture, DPCK spans 4–202; the sequence is WVGLTGGIGS…AFYSGIFASK (199 aa). Residue 12 to 17 coordinates ATP; that stretch reads GSGKSA.

It belongs to the CoaE family.

Its subcellular location is the cytoplasm. The enzyme catalyses 3'-dephospho-CoA + ATP = ADP + CoA + H(+). The protein operates within cofactor biosynthesis; coenzyme A biosynthesis; CoA from (R)-pantothenate: step 5/5. Catalyzes the phosphorylation of the 3'-hydroxyl group of dephosphocoenzyme A to form coenzyme A. This chain is Dephospho-CoA kinase, found in Neisseria gonorrhoeae (strain ATCC 700825 / FA 1090).